The sequence spans 434 residues: Alpha-enolase (434 aa).

S2 carries the post-translational modification N-acetylserine. K5 carries the post-translational modification N6-acetyllysine. S40 is a binding site for Mg(2+). Y44 bears the Phosphotyrosine mark. N6-acetyllysine; alternate is present on K60. Residue K60 is modified to N6-succinyllysine; alternate. An N6-acetyllysine mark is found at K64 and K71. K89 bears the N6-acetyllysine; alternate mark. K89 bears the N6-succinyllysine; alternate mark. N6-acetyllysine is present on K126. Positions 158 and 167 each coordinate substrate. 2 positions are modified to N6-acetyllysine: K193 and K199. An N6-acetyllysine; alternate modification is found at K202. K202 participates in a covalent cross-link: Glycyl lysine isopeptide (Lys-Gly) (interchain with G-Cter in SUMO2); alternate. The active-site Proton donor is the E210. K228 and K233 each carry N6-acetyllysine; alternate. K228 carries the post-translational modification N6-succinyllysine; alternate. At K228 the chain carries N6-(2-hydroxyisobutyryl)lysine; alternate. K233 is subject to N6-malonyllysine; alternate. D245 is a binding site for Mg(2+). K256 bears the N6-acetyllysine mark. Position 263 is a phosphoserine (S263). K281 carries the N6-acetyllysine; alternate modification. Position 281 is an N6-(2-hydroxyisobutyryl)lysine; alternate (K281). K285 is modified (N6-acetyllysine). Y287 is subject to Phosphotyrosine. S291 is modified (phosphoserine). Positions 293 and 318 each coordinate Mg(2+). Residues E293 and D318 each contribute to the substrate site. K335 and K343 each carry N6-acetyllysine. Catalysis depends on K343, which acts as the Proton acceptor. Residues 370–373 (SHRS) and K394 contribute to the substrate site. The required for interaction with PLG stretch occupies residues 405-434 (AKYNQILRIEEELGSKAKFAGRSFRNPLAK). Residue K406 is modified to N6-acetyllysine. The residue at position 420 (K420) is an N6-acetyllysine; alternate. An N6-succinyllysine; alternate modification is found at K420. K420 is modified (N6-malonyllysine; alternate).

It belongs to the enolase family. Mammalian enolase is composed of 3 isozyme subunits, alpha, beta and gamma, which can form homodimers or heterodimers which are cell-type and development-specific. ENO1 interacts with PLG in the neuronal plasma membrane and promotes its activation. The C-terminal lysine is required for this binding. Interacts with ENO4 and PGAM2. Interacts with CMTM6. Mg(2+) serves as cofactor. In terms of processing, ISGylated. Lysine 2-hydroxyisobutyrylation (Khib) by p300/EP300 activates the phosphopyruvate hydratase activity. Expressed in flagella of epididymal sperm. The alpha/alpha homodimer is expressed in embryo and in most adult tissues. The alpha/beta heterodimer and the beta/beta homodimer are found in striated muscle, and the alpha/gamma heterodimer and the gamma/gamma homodimer in neurons.

Its subcellular location is the cytoplasm. It is found in the cell membrane. It carries out the reaction (2R)-2-phosphoglycerate = phosphoenolpyruvate + H2O. It functions in the pathway carbohydrate degradation; glycolysis; pyruvate from D-glyceraldehyde 3-phosphate: step 4/5. In terms of biological role, glycolytic enzyme that catalyzes the conversion of 2-phosphoglycerate to phosphoenolpyruvate. In addition to glycolysis, involved in various processes such as growth control, hypoxia tolerance and allergic responses. May also function in the intravascular and pericellular fibrinolytic system due to its ability to serve as a receptor and activator of plasminogen on the cell surface of several cell-types such as leukocytes and neurons. Stimulates immunoglobulin production. The sequence is that of Alpha-enolase (Eno1) from Rattus norvegicus (Rat).